Here is a 268-residue protein sequence, read N- to C-terminus: Tryptophan synthase alpha chain (268 aa).

Active-site proton acceptor residues include E49 and D60.

This sequence belongs to the TrpA family. In terms of assembly, tetramer of two alpha and two beta chains.

It carries out the reaction (1S,2R)-1-C-(indol-3-yl)glycerol 3-phosphate + L-serine = D-glyceraldehyde 3-phosphate + L-tryptophan + H2O. It functions in the pathway amino-acid biosynthesis; L-tryptophan biosynthesis; L-tryptophan from chorismate: step 5/5. The alpha subunit is responsible for the aldol cleavage of indoleglycerol phosphate to indole and glyceraldehyde 3-phosphate. This chain is Tryptophan synthase alpha chain, found in Salmonella agona (strain SL483).